Reading from the N-terminus, the 404-residue chain is Glutamate-pyruvate aminotransferase AlaA (404 aa).

L-alanine contacts are provided by glycine 41 and asparagine 179. The residue at position 240 (lysine 240) is an N6-(pyridoxal phosphate)lysine. Arginine 378 contributes to the L-alanine binding site.

It belongs to the class-I pyridoxal-phosphate-dependent aminotransferase family. In terms of assembly, homodimer. Requires pyridoxal 5'-phosphate as cofactor.

It carries out the reaction L-alanine + 2-oxoglutarate = pyruvate + L-glutamate. The protein operates within amino-acid biosynthesis; L-alanine biosynthesis. Its function is as follows. Involved in the biosynthesis of alanine. Catalyzes the transamination of pyruvate by glutamate, leading to the formation of L-alanine and 2-oxoglutarate. Is also able to catalyze the reverse reaction. The sequence is that of Glutamate-pyruvate aminotransferase AlaA (alaA) from Haemophilus influenzae (strain ATCC 51907 / DSM 11121 / KW20 / Rd).